The chain runs to 329 residues: Interferon regulatory factor 1 (329 aa).

The IRF tryptophan pentad repeat DNA-binding region spans 5-113 (RMRMRPWLEM…SAVRVYRMLP (109 aa)). K78 carries the post-translational modification N6-acetyllysine. The interval 93 to 166 (EVKDQSRNKG…LPDDHSSYTT (74 aa)) is disordered. The span at 146–166 (DTFSDGLSSSTLPDDHSSYTT) shows a compositional bias: polar residues. Residues K276 and K300 each participate in a glycyl lysine isopeptide (Lys-Gly) (interchain with G-Cter in SUMO) cross-link.

The protein belongs to the IRF family. As to quaternary structure, monomer. Homodimer. Interacts with EP300. Interacts with MYD88. Interacts with PIAS3. Interacts with SPOP. In terms of processing, phosphorylated by CK2 and this positively regulates its activity. Post-translationally, ubiquitinated in a SPOP-depedent manner. Sumoylation represses the transcriptional activity and displays enhanced resistance to protein degradation. Sumoylated by UBE2I/UBC9 and SUMO1. Inactivates the tumor suppressor activity. Elevated levels in tumor cells. Major site is Lys-276. Sumoylation is enhanced by PIAS3. Desumoylated by SENP1 in tumor cells and appears to compete with ubiquitination on C-terminal sites. Ubiquitinated. Appears to compete with sumoylation on C-terminal sites.

It localises to the nucleus. The protein localises to the cytoplasm. Its activity is regulated as follows. Activated by MYD88. Its function is as follows. Transcriptional regulator which displays a remarkable functional diversity in the regulation of cellular responses. Regulates transcription of IFN and IFN-inducible genes, host response to viral and bacterial infections, regulation of many genes expressed during hematopoiesis, inflammation, immune responses and cell proliferation and differentiation, regulation of the cell cycle and induction of growth arrest and programmed cell death following DNA damage. Stimulates both innate and acquired immune responses through the activation of specific target genes and can act as a transcriptional activator and repressor regulating target genes by binding to an interferon-stimulated response element (ISRE) in their promoters. Has an essentail role in IFNG-dependent immunity to mycobacteria. Binds to a consensus sequence in gene promoters. Its target genes for transcriptional activation activity are: genes involved in anti-viral response, such as IFN-alpha/beta, RIGI, TNFSF10/TRAIL, ZBP1, OAS1/2, PIAS1/GBP, EIF2AK2/PKR and RSAD2/viperin; antibacterial response, such as GBP2, GBP5, IRGB10 and NOS2/INOS; anti-proliferative response, such as p53/TP53, LOX and CDKN1A; apoptosis, such as BBC3/PUMA, CASP1, CASP7 and CASP8; immune response, such as IL7, IL12A/B and IL15, PTGS2/COX2 and CYBB; DNA damage responses and DNA repair, such as POLQ/POLH; MHC class I expression, such as TAP1, PSMB9/LMP2, PSME1/PA28A, PSME2/PA28B and B2M and MHC class II expression, such as CIITA; metabolic enzymes, such as ACOD1/IRG1. Represses genes involved in anti-proliferative response, such as BIRC5/survivin, CCNB1, CCNE1, CDK1, CDK2 and CDK4 and in immune response, such as FOXP3, IL4, ANXA2 and TLR4. Stimulates p53/TP53-dependent transcription through enhanced recruitment of EP300 leading to increased acetylation of p53/TP53. Plays an important role in immune response directly affecting NK maturation and activity, macrophage production of IL12, Th1 development and maturation of CD8+ T-cells. Also implicated in the differentiation and maturation of dendritic cells and in the suppression of regulatory T (Treg) cells development. Acts as a tumor suppressor and plays a role not only in antagonism of tumor cell growth but also in stimulating an immune response against tumor cells. The chain is Interferon regulatory factor 1 (Irf1) from Mus musculus (Mouse).